Consider the following 502-residue polypeptide: UPF0371 protein CLH_2534 (502 aa).

This sequence belongs to the UPF0371 family.

This chain is UPF0371 protein CLH_2534, found in Clostridium botulinum (strain Alaska E43 / Type E3).